Consider the following 261-residue polypeptide: tRNA pseudouridine synthase A (261 aa).

The active-site Nucleophile is Asp-52. Tyr-110 provides a ligand contact to substrate.

The protein belongs to the tRNA pseudouridine synthase TruA family. Homodimer.

It carries out the reaction uridine(38/39/40) in tRNA = pseudouridine(38/39/40) in tRNA. In terms of biological role, formation of pseudouridine at positions 38, 39 and 40 in the anticodon stem and loop of transfer RNAs. The sequence is that of tRNA pseudouridine synthase A from Blochmanniella pennsylvanica (strain BPEN).